The chain runs to 163 residues: Beta-lactoglobulin-2 (163 aa).

2 disulfides stabilise this stretch: Cys66–Cys161 and Cys106–Cys120.

It belongs to the calycin superfamily. Lipocalin family. As to quaternary structure, monomer.

It localises to the secreted. Functionally, lactoglobulin is the primary component of whey, it binds retinol and is probably involved in the transport of that molecule. The polypeptide is Beta-lactoglobulin-2 (LGB2) (Equus asinus (Donkey)).